The primary structure comprises 762 residues: Coleoptile phototropism protein 1 (762 aa).

A compositionally biased stretch (basic and acidic residues) spans 1-12; sequence MWESESESHGGE. The disordered stretch occupies residues 1–29; that stretch reads MWESESESHGGERGLVPVGGGGGSGRHEA. The BTB domain occupies 51–128; that stretch reads SDLLVKVGDV…SYGMAVDLTA (78 aa). The segment covering 227–238 has biased composition (gly residues); sequence PAAIRGGGGSGG. 4 disordered regions span residues 227–264, 460–495, 687–718, and 731–762; these read PAAI…RQAV, MAVA…ASAS, QVDG…AWSS, and GADA…NSIS. The NPH3 domain occupies 268 to 607; the sequence is DWWFEDVSVL…VQVLFTEQVK (340 aa). Residues 654 to 691 are a coiled coil; the sequence is AAAKKDINTLKFELESMKAKYLELQHEMDALQKQVDGR. Over residues 696 to 709 the composition is skewed to low complexity; the sequence is PSPAAAKIGKQQQQ. Residues 736–747 are compositionally biased toward gly residues; it reads AGGGVAPPGGGE. The segment covering 752–762 has biased composition (basic residues); sequence KGPRRWRNSIS.

Belongs to the NPH3 family.

It functions in the pathway protein modification; protein ubiquitination. May act as a substrate-specific adapter of an E3 ubiquitin-protein ligase complex (CUL3-RBX1-BTB) which mediates the ubiquitination and subsequent proteasomal degradation of target proteins. Plays a role as signal transduction component in coleoptile phototropism and lateral translocation of auxin. This chain is Coleoptile phototropism protein 1 (CPT1), found in Oryza sativa subsp. japonica (Rice).